Consider the following 243-residue polypeptide: Cell division protein ZipA (243 aa).

Over 1-4 (MSDM) the chain is Periplasmic. Residues 5-25 (AMIRIGILIAGLLLVAAIFLF) form a helical membrane-spanning segment. The Cytoplasmic segment spans residues 26 to 243 (GRPKKSPQGR…APPLTKSPRW (218 aa)). The segment at 30 to 89 (KSPQGRRVDKGEGQPRERREPVISSEFGAEGDAAERAEGVEQSELNLEGQDASGGNEVGK) is disordered. Over residues 35–50 (RRVDKGEGQPRERREP) the composition is skewed to basic and acidic residues.

This sequence belongs to the ZipA family. In terms of assembly, interacts with FtsZ via their C-terminal domains.

Its subcellular location is the cell inner membrane. Its function is as follows. Essential cell division protein that stabilizes the FtsZ protofilaments by cross-linking them and that serves as a cytoplasmic membrane anchor for the Z ring. Also required for the recruitment to the septal ring of downstream cell division proteins. The polypeptide is Cell division protein ZipA (Xanthomonas axonopodis pv. citri (strain 306)).